We begin with the raw amino-acid sequence, 172 residues long: Myosin regulatory light polypeptide 9 (172 aa).

Residues 1 to 16 (MSSKRAKTKTTKKRPQ) are compositionally biased toward basic residues. A disordered region spans residues 1-20 (MSSKRAKTKTTKKRPQRATS). The residue at position 2 (S2) is an N-acetylserine. Residue T19 is modified to Phosphothreonine; by MLCK, CIT and ROCK2. S20 carries the phosphoserine; by CDC42BP, CIT, MLCK, PAK1, ROCK1, ROCK2, DAPK1, DAPK2 and ZIPK/DAPK3 modification. EF-hand domains are found at residues 29–64 (SQIQ…LGKN), 98–133 (DPED…MGDR), and 134–169 (FTDE…GAKD). Residues D42, N44, D46, and D53 each contribute to the Ca(2+) site.

Myosin is a hexamer of 2 heavy chains and 4 light chains: interacts with myosin heavy chain MYO19. Interacts with LUZP1; the interaction results in inhibition of phosphorylation of MYL9 by DAPK3. In terms of processing, phosphorylation increases the actin-activated myosin ATPase activity and thereby regulates the contractile activity. It is required to generate the driving force in the migration of the cells but not necessary for localization of myosin-2 at the leading edge. Phosphorylation is required for myotube formation. Phosphorylated by DAPK3; DAPK3-mediated phosphorylation is inhibited by LUZP1.

It is found in the cytoplasm. It localises to the cytoskeleton. The protein resides in the cell cortex. Its function is as follows. Myosin regulatory subunit that plays an important role in regulation of both smooth muscle and nonmuscle cell contractile activity via its phosphorylation. Implicated in cytokinesis, receptor capping, and cell locomotion. In myoblasts, may regulate PIEZO1-dependent cortical actomyosin assembly involved in myotube formation. This is Myosin regulatory light polypeptide 9 (MYL9) from Bos taurus (Bovine).